A 163-amino-acid polypeptide reads, in one-letter code: MHKKYFIGTSILIAVFVVIFDQVTKYIIATTMKIGDSFEVIPHFLNITSHRNNGAAWGILSGKMTFFFIITIIILIALVYFFIKDAQYNLFMQVAISLLFAGALGNFIDRILTGEVVDFIDTNIFGYDFPIFNIADSSLTIGVILIIIALLKDTSNKKDKEVK.

Helical transmembrane passes span 11–31 (ILIAVFVVIFDQVTKYIIATT), 63–83 (KMTFFFIITIIILIALVYFFI), and 88–108 (YNLFMQVAISLLFAGALGNFI). Active-site residues include Asp-118 and Asp-136. Residues 131–151 (IFNIADSSLTIGVILIIIALL) traverse the membrane as a helical segment.

Belongs to the peptidase A8 family.

It localises to the cell membrane. The catalysed reaction is Release of signal peptides from bacterial membrane prolipoproteins. Hydrolyzes -Xaa-Yaa-Zaa-|-(S,diacylglyceryl)Cys-, in which Xaa is hydrophobic (preferably Leu), and Yaa (Ala or Ser) and Zaa (Gly or Ala) have small, neutral side chains.. It participates in protein modification; lipoprotein biosynthesis (signal peptide cleavage). Functionally, this protein specifically catalyzes the removal of signal peptides from prolipoproteins. This is Lipoprotein signal peptidase from Staphylococcus aureus.